Reading from the N-terminus, the 630-residue chain is MTVARNRAGAGPGKGSPISSFADKTFTDPARIRNFCIIAHIDHGKSTLADRMLQLTGVVEERQMRAQYLDRMDIERERGITIKAQNVRLPWKVGDDEFVIHLIDTPGHVDFTYEVSRALEACEGAVLLVDAAQGIEAQTLANLYLAMEKDLTIIPVLNKIDLPAADPDRYAEEIAHITGCEPGDVLRVSGKTGMGVKELLDEVVRQVPAPVGDPDGPARAMIFDSVYDAYRGVVTYVRVVDGRISPREKITMMSTGATHDLIEVGIISPEPKASIGLGVGEVGYLITGVKDVRQSRVGDTVTAARGGATEPLVGYRDPKPMVYSGLYPLDGSDYPVLRDALDKLRLNDAALAYEPETSVALGFGFRCGFLGLLHMEITRDRLEREFGLELISTSPNVVYRVVMEDGAEHVVTNPSYWPEGKIREVYEPMVKCTVIAPSEFIGAIMELCQNRRGELGGMDYLSETRVELRYEMPMGEIMFDFFDALKSRTKGYASLDYEEAGEQQADLVKVDILLQGEAVDAFSSIVHRSAAGAYGGRMTSKLRELIPRQQFEVPIQAAIGSKIISRENIRAIRKDVLAKCYGGDISRKRKLLEKQKEGKKRMKTIGRVEVPQEAFVAALSSESVGDKPKK.

Residues 1 to 22 (MTVARNRAGAGPGKGSPISSFA) are disordered. A tr-type G domain is found at 30 to 211 (ARIRNFCIIA…EVVRQVPAPV (182 aa)). GTP is bound by residues 42–47 (DHGKST) and 158–161 (NKID).

It belongs to the TRAFAC class translation factor GTPase superfamily. Classic translation factor GTPase family. LepA subfamily.

The protein resides in the cell membrane. It carries out the reaction GTP + H2O = GDP + phosphate + H(+). In terms of biological role, required for accurate and efficient protein synthesis under certain stress conditions. May act as a fidelity factor of the translation reaction, by catalyzing a one-codon backward translocation of tRNAs on improperly translocated ribosomes. Back-translocation proceeds from a post-translocation (POST) complex to a pre-translocation (PRE) complex, thus giving elongation factor G a second chance to translocate the tRNAs correctly. Binds to ribosomes in a GTP-dependent manner. This chain is Elongation factor 4, found in Rhodococcus opacus (strain B4).